A 1225-amino-acid chain; its full sequence is ATP-dependent helicase/nuclease subunit A (1225 aa).

Residues 11 to 478 (AQWTDAQWKS…IDLSKNFRSR (468 aa)) enclose the UvrD-like helicase ATP-binding domain. 32 to 39 (AAAGSGKT) lines the ATP pocket. The UvrD-like helicase C-terminal domain maps to 479–790 (KEVLATTNYL…RMMTVHSSKG (312 aa)). The span at 999–1014 (EKPSKQSVSELKRQLE) shows a compositional bias: basic and acidic residues. A disordered region spans residues 999–1018 (EKPSKQSVSELKRQLETEES).

It belongs to the helicase family. AddA subfamily. As to quaternary structure, heterodimer of AddA and AddB/RexB. The cofactor is Mg(2+).

The catalysed reaction is Couples ATP hydrolysis with the unwinding of duplex DNA by translocating in the 3'-5' direction.. The enzyme catalyses ATP + H2O = ADP + phosphate + H(+). Functionally, the heterodimer acts as both an ATP-dependent DNA helicase and an ATP-dependent, dual-direction single-stranded exonuclease. Recognizes the chi site generating a DNA molecule suitable for the initiation of homologous recombination. The AddA nuclease domain is required for chi fragment generation; this subunit has the helicase and 3' -&gt; 5' nuclease activities. This Staphylococcus haemolyticus (strain JCSC1435) protein is ATP-dependent helicase/nuclease subunit A.